A 218-amino-acid chain; its full sequence is MIKITKEANIARNVLLLKGLENPILKEYNDIKEKERELLIAEYLYKIMSLLNLDLKNESLKDTPIRISKMYVNEIFSGLDYKNFPKIMLMDNKIKFHEMIIVRDILLISTCEHHFITINGQATIAYIPENKIIGLSKINRIAQFFAKRPQIQERLTKQILLVLQVLLQTKNVAIIIHMDHFCVKARGVCDTSSSTVTSCLDGLFKSDKNIREEFFFKK.

C111, H114, and C182 together coordinate Zn(2+).

It belongs to the GTP cyclohydrolase I family. Toroid-shaped homodecamer, composed of two pentamers of five dimers.

It catalyses the reaction GTP + H2O = 7,8-dihydroneopterin 3'-triphosphate + formate + H(+). The protein operates within cofactor biosynthesis; 7,8-dihydroneopterin triphosphate biosynthesis; 7,8-dihydroneopterin triphosphate from GTP: step 1/1. The chain is GTP cyclohydrolase 1 from Buchnera aphidicola subsp. Schizaphis graminum (strain Sg).